A 546-amino-acid chain; its full sequence is Chaperonin GroEL (546 aa).

ATP contacts are provided by residues 30-33 (TLGP), lysine 51, 87-91 (DGTTT), glycine 415, 479-481 (NAA), and aspartate 495. A disordered region spans residues 527-546 (DKPAAPPMPGGMGGMGGMDF). The segment covering 536–546 (GGMGGMGGMDF) has biased composition (gly residues).

The protein belongs to the chaperonin (HSP60) family. As to quaternary structure, forms a cylinder of 14 subunits composed of two heptameric rings stacked back-to-back. Interacts with the co-chaperonin GroES.

It localises to the cytoplasm. It carries out the reaction ATP + H2O + a folded polypeptide = ADP + phosphate + an unfolded polypeptide.. Together with its co-chaperonin GroES, plays an essential role in assisting protein folding. The GroEL-GroES system forms a nano-cage that allows encapsulation of the non-native substrate proteins and provides a physical environment optimized to promote and accelerate protein folding. This is Chaperonin GroEL from Bordetella petrii (strain ATCC BAA-461 / DSM 12804 / CCUG 43448).